Consider the following 89-residue polypeptide: Small ribosomal subunit protein uS15 (89 aa).

Belongs to the universal ribosomal protein uS15 family. As to quaternary structure, part of the 30S ribosomal subunit. Forms a bridge to the 50S subunit in the 70S ribosome, contacting the 23S rRNA.

Its function is as follows. One of the primary rRNA binding proteins, it binds directly to 16S rRNA where it helps nucleate assembly of the platform of the 30S subunit by binding and bridging several RNA helices of the 16S rRNA. Functionally, forms an intersubunit bridge (bridge B4) with the 23S rRNA of the 50S subunit in the ribosome. The sequence is that of Small ribosomal subunit protein uS15 from Chloroflexus aurantiacus (strain ATCC 29366 / DSM 635 / J-10-fl).